The chain runs to 193 residues: Acyl carrier protein phosphodiesterase (193 aa).

The protein belongs to the AcpH family.

It catalyses the reaction holo-[ACP] + H2O = apo-[ACP] + (R)-4'-phosphopantetheine + H(+). Its function is as follows. Converts holo-ACP to apo-ACP by hydrolytic cleavage of the phosphopantetheine prosthetic group from ACP. This is Acyl carrier protein phosphodiesterase from Yersinia enterocolitica serotype O:8 / biotype 1B (strain NCTC 13174 / 8081).